A 289-amino-acid chain; its full sequence is RNA-binding protein CP31B, chloroplastic (289 aa).

A chloroplast-targeting transit peptide spans 1–71 (MTSSVLTPSL…NSSPVVTFVS (71 aa)). 2 consecutive RRM domains span residues 113 to 191 (AKLF…RAAP) and 207 to 285 (FRIY…VAEE).

In terms of processing, ADP-ribosylated by the Pseudomonas syringae type III effector HopU1. ADP-ribosylation reduces the ability of the protein to bind RNA.

It is found in the plastid. The protein localises to the chloroplast. In terms of biological role, required for specific RNA editing events in chloroplasts and stabilizes specific chloroplast mRNAs. The chain is RNA-binding protein CP31B, chloroplastic from Arabidopsis thaliana (Mouse-ear cress).